A 262-amino-acid chain; its full sequence is MILDEIIKKTKADLEKRKKEYPLEWLGRSLAYNPFVPRPVEEVLKSTPDDPYKIIAEVKKASPSKGVIREDFDPVAIAKEYEKGGANAISVLTEPHYFQGHIEYLTQIRRYVPMPLLRKDFIIDKYQLVEALVYGADFVLLIAKALSRKELKELLEYTWHLGMEALVEIHDKADLIKAIFAGANIIGINHRNLETFEMDMSLSEKLIPLIPNGKIIVAESGIHSHEQVVELNKLGVDAFLIGEHFMRQDNIAEVVKKIKGLA.

This sequence belongs to the TrpC family.

It carries out the reaction 1-(2-carboxyphenylamino)-1-deoxy-D-ribulose 5-phosphate + H(+) = (1S,2R)-1-C-(indol-3-yl)glycerol 3-phosphate + CO2 + H2O. It participates in amino-acid biosynthesis; L-tryptophan biosynthesis; L-tryptophan from chorismate: step 4/5. The protein is Indole-3-glycerol phosphate synthase of Nitratiruptor sp. (strain SB155-2).